The chain runs to 240 residues: Aldehyde dehydrogenase, cytosolic 2 (240 aa).

Residues glutamate 8 and cysteine 42 contribute to the active site. N6-acetyllysine occurs at positions 106, 149, 151, and 174.

The protein belongs to the aldehyde dehydrogenase family. In terms of assembly, homotetramer. Non-lens specific, predominant form expressed in the liver.

Its subcellular location is the cytoplasm. It carries out the reaction an aldehyde + NAD(+) + H2O = a carboxylate + NADH + 2 H(+). It functions in the pathway alcohol metabolism; ethanol degradation; acetate from ethanol: step 2/2. Its function is as follows. Elephant shrews, in contrast to other mammals, possess both a lens- and a non-lens specific class-1 aldehyde dehydrogenase. Can convert/oxidize retinaldehyde to retinoic acid. The protein is Aldehyde dehydrogenase, cytosolic 2 of Macroscelides proboscideus (Short-eared elephant shrew).